Consider the following 338-residue polypeptide: Phenylalanine--tRNA ligase alpha subunit (338 aa).

Glu-252 serves as a coordination point for Mg(2+).

This sequence belongs to the class-II aminoacyl-tRNA synthetase family. Phe-tRNA synthetase alpha subunit type 1 subfamily. In terms of assembly, tetramer of two alpha and two beta subunits. The cofactor is Mg(2+).

Its subcellular location is the cytoplasm. The enzyme catalyses tRNA(Phe) + L-phenylalanine + ATP = L-phenylalanyl-tRNA(Phe) + AMP + diphosphate + H(+). The sequence is that of Phenylalanine--tRNA ligase alpha subunit from Pseudomonas paraeruginosa (strain DSM 24068 / PA7) (Pseudomonas aeruginosa (strain PA7)).